The primary structure comprises 194 residues: Peptidyl-tRNA hydrolase (194 aa).

Position 17 (Y17) interacts with tRNA. H22 (proton acceptor) is an active-site residue. Positions 68, 70, and 116 each coordinate tRNA.

The protein belongs to the PTH family. Monomer.

It localises to the cytoplasm. It catalyses the reaction an N-acyl-L-alpha-aminoacyl-tRNA + H2O = an N-acyl-L-amino acid + a tRNA + H(+). Functionally, hydrolyzes ribosome-free peptidyl-tRNAs (with 1 or more amino acids incorporated), which drop off the ribosome during protein synthesis, or as a result of ribosome stalling. Catalyzes the release of premature peptidyl moieties from peptidyl-tRNA molecules trapped in stalled 50S ribosomal subunits, and thus maintains levels of free tRNAs and 50S ribosomes. In Glaesserella parasuis serovar 5 (strain SH0165) (Haemophilus parasuis), this protein is Peptidyl-tRNA hydrolase.